A 325-amino-acid polypeptide reads, in one-letter code: E3 ubiquitin-protein ligase SIAH2 (325 aa).

Positions 1–15 are enriched in polar residues; that stretch reads MSRPSSTGPSANKPC. The segment at 1–43 is disordered; it reads MSRPSSTGPSANKPCSKQPPPPQTPHAPSPAAPPAAATISAAG. Ser6 is subject to Phosphoserine. The residue at position 16 (Ser16) is a Phosphoserine; by DYRK2. Positions 17–33 are enriched in pro residues; it reads KQPPPPQTPHAPSPAAP. Position 24 is a phosphothreonine; by MAPK14 (Thr24). Ser29 is subject to Phosphoserine; by DYRK2 and MAPK14. The span at 34–43 shows a compositional bias: low complexity; that stretch reads PAAATISAAG. Ser69 is subject to Phosphoserine; by DYRK2. Residues 81 to 116 form an RING-type zinc finger; the sequence is CPVCFDYVLPPILQCQAGHLVCNQCRQKLSCCPTCR. Thr120 bears the Phosphothreonine; by DYRK2 mark. The interval 131-323 is SBD; sequence VASAVLFPCK…LGINVTISTC (193 aa). The SIAH-type zinc finger occupies 134–194; the sequence is AVLFPCKYAT…VMSHLMHAHK (61 aa). Zn(2+) contacts are provided by Cys139, Cys146, His158, Cys162, Cys169, Cys176, His188, and His193.

It belongs to the SINA (Seven in absentia) family. Homodimer. Interacts with VAV1, without mediating its ubiquitin-mediated degradation. Probable component of some large E3 complex possibly composed of UBE2D1, SIAH2, CACYBP/SIP, SKP1, APC and TBL1X. Interacts with UBE2I. Interacts with UBE2E2. Interacts with PEG10, which may inhibit its activity. Interacts with PEG3 and EGLN2. Interacts with DYRK2. Interacts with SNCAIP. Interacts with NR1D1 and NR1D2. Interacts with DCC. Interacts with AXIN1. In terms of processing, phosphorylated at Thr-24 and Ser-29 by MAPK14, which mediates the degradation by the proteasome of EGLN3. Phosphorylated at Ser-29 by DYRK2; this increases the ubiquitin ligase activity and promotes degradation of EGLN3. In terms of tissue distribution, detected in brain (at protein level).

Its subcellular location is the cytoplasm. It is found in the nucleus. The catalysed reaction is S-ubiquitinyl-[E2 ubiquitin-conjugating enzyme]-L-cysteine + [acceptor protein]-L-lysine = [E2 ubiquitin-conjugating enzyme]-L-cysteine + N(6)-ubiquitinyl-[acceptor protein]-L-lysine.. Its pathway is protein modification; protein ubiquitination. Functionally, E3 ubiquitin-protein ligase that mediates ubiquitination and subsequent proteasomal degradation of target proteins. E3 ubiquitin ligases accept ubiquitin from an E2 ubiquitin-conjugating enzyme in the form of a thioester and then directly transfers the ubiquitin to targeted substrates. Mediates E3 ubiquitin ligase activity either through direct binding to substrates or by functioning as the essential RING domain subunit of larger E3 complexes. Mediates ubiquitination and proteasomal degradation of DYRK2 in response to hypoxia. Promotes monoubiquitination of SNCA. Triggers the ubiquitin-mediated degradation of many substrates, including proteins involved in transcription regulation (GPS2, POU2AF1, PML, NCOR1), a cell surface receptor (DCC), an antiapoptotic protein (BAG1), and a protein involved in synaptic vesicle function in neurons (SYP). It is thereby involved in apoptosis, tumor suppression, cell cycle, transcription and signaling processes. Has some overlapping function with SIAH1. Triggers the ubiquitin-mediated degradation of TRAF2, whereas SIAH1 does not. Regulates cellular clock function via ubiquitination of circadian transcriptional repressors NR1D1 and NR1D2 leading to their proteasomal degradation. Plays an important role in mediating the rhythmic degradation/clearance of NR1D1 and NR1D2 contributing to their circadian profile of protein abundance. Mediates ubiquitination and degradation of EGLN2 and EGLN3 in response to the unfolded protein response (UPR), leading to their degradation and subsequent stabilization of ATF4. Also part of the Wnt signaling pathway in which it mediates the Wnt-induced ubiquitin-mediated proteasomal degradation of AXIN1. The sequence is that of E3 ubiquitin-protein ligase SIAH2 (Siah2) from Rattus norvegicus (Rat).